A 385-amino-acid polypeptide reads, in one-letter code: Sensor histidine kinase Hik2 (385 aa).

A GAF domain is found at 11–131; it reads ALCRTQLELV…QQVAQTLAIA (121 aa). Residue Cys-13 coordinates [3Fe-4S] cluster. A DHp domain, may sense NaCl region spans residues 142-270; the sequence is SHSPAQPLDQ…PQLPPIWLEE (129 aa). The 224-residue stretch at 158-381 folds into the Histidine kinase domain; it reads DLLHQLRNPV…AFTLAIPWQM (224 aa). Position 161 is a phosphohistidine; by autocatalysis (His-161).

The protein belongs to the chloroplast sensor kinase protein family. In terms of assembly, hexamers; upon treatment with 0.5 M NaCl only tetramers are seen. The tetramers are probably inactive. The cofactor is [3Fe-4S] cluster. Autophosphorylates, possibly on His-161.

The enzyme catalyses ATP + protein L-histidine = ADP + protein N-phospho-L-histidine.. Its function is as follows. Member of 2 two-component regulatory system(s) Hik2/Rre1 and Hik2/RppA. Transduces PQ (plastoquinone) redox signals to photosystem gene expression machinery during the adjustment of photosystem stoichiometry. Reduced PQ suppresses its autophosphorylation activity (i.e. kinase activity is higher under oxidizing conditions). As part of a two-component regulatory system with Rre1, controls expression of sigB and several other genes in response to hyperosmotic stress. May transfer phosphate to RppA in a possible Hik2/RppA two-component system. This is Sensor histidine kinase Hik2 from Thermosynechococcus vestitus (strain NIES-2133 / IAM M-273 / BP-1).